The primary structure comprises 914 residues: Golgin candidate 6 (914 aa).

Coiled coils occupy residues 723–837 and 863–901; these read IEKQ…SLKG and EDEL…LEDI. S911 is subject to Phosphoserine.

The protein resides in the golgi apparatus. It is found in the golgi stack. Golgi matrix protein playing a role in tethering of vesicles to Golgi membranes and in maintaining the overall structure of the Golgi apparatus. Functions in the anterograde transport of storage protein precursors from the endoplasmic reticulum (ER) to the Golgi complex. The polypeptide is Golgin candidate 6 (GC6) (Arabidopsis thaliana (Mouse-ear cress)).